The chain runs to 518 residues: ORC1-type DNA replication protein 7 (518 aa).

94-98 (TGKTA) lines the ATP pocket. The tract at residues 165-196 (DDDPNALEIGGSPGDDRTGNESSEGSDVSDSF) is disordered. Positions 186 to 196 (SSEGSDVSDSF) are enriched in low complexity. The ATP site is built by Y318 and R330.

This sequence belongs to the CDC6/cdc18 family.

In terms of biological role, involved in regulation of DNA replication. Required to initiate DNA replication of the circular chromosome at a nearby autonomously replicating sequence (ARS) oriC1. This is ORC1-type DNA replication protein 7 (orc7) from Halobacterium salinarum (strain ATCC 700922 / JCM 11081 / NRC-1) (Halobacterium halobium).